The primary structure comprises 991 residues: 5'-3' exoribonuclease 2 (991 aa).

The short motif at 264–268 (TKKTK) is the Nuclear localization signal element. The span at 404–418 (RRNENYRRRQQRESN) shows a compositional bias: basic and acidic residues. 3 disordered regions span residues 404-461 (RRNE…TQKI), 547-582 (SIESSTPVVHPIDTKVSNVGQKRKAPDSTEENENTD), and 872-991 (AERS…NGYY). Positions 433–452 (SVETQSTEVVTSSKSTSVDT) are enriched in low complexity. Low complexity-rich tracts occupy residues 878–889 (SRRNNGNSYRGG) and 896–910 (RRSYQSQSYSSRQSY). Positions 926-938 (WSGNGNFPRSNAS) are enriched in polar residues. Over residues 946 to 958 (EGYGGRSRGGGYS) the composition is skewed to gly residues. The span at 980–991 (ESYNNNNRNGYY) shows a compositional bias: polar residues.

This sequence belongs to the 5'-3' exonuclease family. XRN2/RAT1 subfamily. Interacts with din1/rai1; the interaction is direct, stabilizes dhp1 protein structure and may stimulate its exoribonuclease activity. The interaction also stimulates din1 pyrophosphohydrolase activity, probably by recruiting it to mRNA substrates.

It is found in the nucleus. In terms of biological role, possesses 5'-&gt;3' exoribonuclease activity. Required for the processing of nuclear mRNA and rRNA precursors. May promote the termination of transcription by RNA polymerase II. Essential for vegetative cell growth and chromosome segregation. This chain is 5'-3' exoribonuclease 2 (dhp1), found in Schizosaccharomyces pombe (strain 972 / ATCC 24843) (Fission yeast).